Consider the following 155-residue polypeptide: Endoribonuclease YbeY (155 aa).

Residues H120, H124, and H130 each contribute to the Zn(2+) site.

The protein belongs to the endoribonuclease YbeY family. The cofactor is Zn(2+).

The protein localises to the cytoplasm. Functionally, single strand-specific metallo-endoribonuclease involved in late-stage 70S ribosome quality control and in maturation of the 3' terminus of the 16S rRNA. The polypeptide is Endoribonuclease YbeY (Staphylococcus aureus (strain Mu3 / ATCC 700698)).